The chain runs to 286 residues: uncharacterized protein (286 aa).

2 disordered regions span residues 59–89 (PESAPGKPGCAEAESAGTAAATESHGAPGAK) and 225–286 (RQRK…EDTR). Residues 69–85 (AEAESAGTAAATESHGA) are compositionally biased toward low complexity.

This is an uncharacterized protein from Mus musculus (Mouse).